We begin with the raw amino-acid sequence, 804 residues long: Phenylalanine--tRNA ligase beta subunit (804 aa).

One can recognise a tRNA-binding domain in the interval 38–148 (RAAFRAFTIA…ENAPVGTSFA (111 aa)). The region spanning 401–476 (HTARVIDFPV…RIHGINRIDP (76 aa)) is the B5 domain. Mg(2+) contacts are provided by aspartate 454, aspartate 460, glutamate 463, and glutamate 464. The FDX-ACB domain occupies 710–803 (SLFQSLKRDY…VAKQTGGVLR (94 aa)).

The protein belongs to the phenylalanyl-tRNA synthetase beta subunit family. Type 1 subfamily. Tetramer of two alpha and two beta subunits. Mg(2+) is required as a cofactor.

The protein localises to the cytoplasm. The catalysed reaction is tRNA(Phe) + L-phenylalanine + ATP = L-phenylalanyl-tRNA(Phe) + AMP + diphosphate + H(+). The protein is Phenylalanine--tRNA ligase beta subunit of Brucella suis biovar 1 (strain 1330).